A 176-amino-acid chain; its full sequence is RNA 2',3'-cyclic phosphodiesterase (176 aa).

Catalysis depends on histidine 43, which acts as the Proton donor. 2 consecutive short sequence motifs (HXTX) follow at residues 43–46 and 125–128; these read HLTL and HITL. The active-site Proton acceptor is the histidine 125.

The protein belongs to the 2H phosphoesterase superfamily. ThpR family. Monomer.

The enzyme catalyses a 3'-end 2',3'-cyclophospho-ribonucleotide-RNA + H2O = a 3'-end 2'-phospho-ribonucleotide-RNA + H(+). Hydrolyzes RNA 2',3'-cyclic phosphodiester to an RNA 2'-phosphomonoester. In vitro, can also ligate 5' and 3' half-tRNA molecules with 2',3'-cyclic phosphate and 5'-hydroxyl termini, respectively, to the product containing the 2'-5' phosphodiester linkage. This reaction does not require ATP and is reversible. This is RNA 2',3'-cyclic phosphodiesterase from Escherichia coli (strain K12).